Consider the following 325-residue polypeptide: GMP reductase (325 aa).

Residue Cys-173 is the Thioimidate intermediate of the active site. NADP(+) is bound at residue 202 to 225; sequence IIADGGIRSHGDIAKSIRFGATMV.

It belongs to the IMPDH/GMPR family. GuaC type 2 subfamily.

The enzyme catalyses IMP + NH4(+) + NADP(+) = GMP + NADPH + 2 H(+). Functionally, catalyzes the irreversible NADPH-dependent deamination of GMP to IMP. It functions in the conversion of nucleobase, nucleoside and nucleotide derivatives of G to A nucleotides, and in maintaining the intracellular balance of A and G nucleotides. This is GMP reductase from Paracidovorax citrulli (strain AAC00-1) (Acidovorax citrulli).